The chain runs to 514 residues: LWamide neuropeptides (514 aa).

Positions 1 to 22 are cleaved as a signal peptide; it reads MALKCHLVLLAITLLLAQCSGS. Over residues 23–53 the composition is skewed to basic and acidic residues; it reads VDKKDSTTNHLDEKKTDSTEAHIVQETDALK. A propeptide spanning residues 23–75 is cleaved from the precursor; that stretch reads VDKKDSTTNHLDEKKTDSTEAHIVQETDALKENSYLGAEEESKEEDKKRSAAP. The segment at 23–180 is disordered; sequence VDKKDSTTNH…PGLWGRSADA (158 aa). Residues Trp81 and Trp90 each carry the tryptophan amide modification. The propeptide occupies 93-97; sequence SADAG. A tryptophan amide mark is found at Trp102 and Trp111. Positions 114–118 are excised as a propeptide; sequence SADAG. Tryptophan amide is present on residues Trp123 and Trp132. Positions 135–139 are excised as a propeptide; the sequence is SADAG. 2 positions are modified to tryptophan amide: Trp144 and Trp153. A propeptide spanning residues 156-160 is cleaved from the precursor; that stretch reads SADAG. Tryptophan amide is present on residues Trp165 and Trp174. Positions 177–181 are excised as a propeptide; the sequence is SADAR. Trp186 is subject to Tryptophan amide. Residues 190–199 constitute a propeptide that is removed on maturation; sequence EIYALWGGKR. Trp205 is modified (tryptophan amide). The propeptide occupies 208 to 212; that stretch reads SADPG. A Tryptophan amide modification is found at Trp217. The propeptide occupies 221 to 230; the sequence is ELVGLWGGKR. The residue at position 236 (Trp236) is a Tryptophan amide. A propeptide spanning residues 239–243 is cleaved from the precursor; the sequence is SAEAG. Trp248 and Trp257 each carry tryptophan amide. The segment at 258 to 475 is disordered; it reads GRSADPLQPG…GRSAGSGQLG (218 aa). Residues 260 to 264 constitute a propeptide that is removed on maturation; sequence SADPL. Tryptophan amide is present on residues Trp269 and Trp278. The propeptide occupies 281 to 284; that stretch reads SADP. Trp290 and Trp299 each carry tryptophan amide. The propeptide occupies 302–305; it reads SADP. Tryptophan amide occurs at positions 311 and 320. Residues 323 to 326 constitute a propeptide that is removed on maturation; sequence SADP. Residues Trp332 and Trp341 each carry the tryptophan amide modification. A propeptide spanning residues 344-347 is cleaved from the precursor; it reads SADP. Trp353 is subject to Tryptophan amide. The propeptide occupies 356-366; that stretch reads SPGLWGRSADP. Residue Trp372 is modified to Tryptophan amide. The propeptide occupies 376–387; sequence QNPGFWGRSADP. A tryptophan amide mark is found at Trp393 and Trp402. A propeptide spanning residues 405-408 is cleaved from the precursor; it reads SADP. Tryptophan amide is present on residues Trp414 and Trp423. The propeptide occupies 426–429; it reads SADP. Trp435 and Trp444 each carry tryptophan amide. Residues 447–450 constitute a propeptide that is removed on maturation; sequence SADP. 2 positions are modified to tryptophan amide: Trp456 and Trp465. A propeptide spanning residues 468–472 is cleaved from the precursor; sequence SAGSG. Tryptophan amide is present on residues Trp477 and Trp487. The tract at residues 489 to 514 is disordered; it reads RSAEPPQFEDLEDLKKKSAIPQPKGQ. A propeptide spanning residues 490-514 is cleaved from the precursor; that stretch reads SAEPPQFEDLEDLKKKSAIPQPKGQ.

Belongs to the LWamide neuropeptide family.

The protein localises to the secreted. Metamorphosin A may be part of an internal signaling system involved in control of metamorphosis. The sequence is that of LWamide neuropeptides from Anthopleura elegantissima (Green aggregating anemone).